A 365-amino-acid polypeptide reads, in one-letter code: SWR1 complex subunit 2 (365 aa).

2 disordered regions span residues 43 to 83 (ALKE…NEKE) and 95 to 147 (PGKT…EGEK). A compositionally biased stretch (acidic residues) spans 48-74 (EHDDEYEAEREVADEFDSDFNDDEPEP). Positions 99-108 (ASKKKKKKTK) are enriched in basic residues. The segment covering 118–132 (GDEKPGEELGNKEQE) has biased composition (basic and acidic residues). 2 coiled-coil regions span residues 123 to 150 (GEELGNKEQEEKEENEAQEDMEGEKVIR) and 184 to 225 (GEEK…KAIV). A compositionally biased stretch (acidic residues) spans 133-144 (EKEENEAQEDME). Positions 333–365 (RTKIPKSNKSFSLRSSARFLSSESEEESEEDSD) are disordered. The segment covering 342–354 (SFSLRSSARFLSS) has biased composition (low complexity). Acidic residues predominate over residues 355–365 (ESEEESEEDSD).

It belongs to the VPS72/YL1 family. In terms of assembly, component of the SWR1 chromatin-remodeling complex composed of at least ARP6/ESD1/SUF3, PIE1, SWC6, SWC2 and H2AZs (HTA8, HTA9, HTA11). Interacts directly with SWC6 and H2AZs, but not with ARP6.

Functionally, component of the SWR1 complex which mediates the ATP-dependent exchange of histone H2A for the H2A variant H2A.F/Z leading to transcriptional regulation of selected genes (e.g. FLC) by chromatin remodeling. This Arabidopsis thaliana (Mouse-ear cress) protein is SWR1 complex subunit 2 (SWC2).